We begin with the raw amino-acid sequence, 844 residues long: MSTETKETRPETKPEDLGTHTTVDVPGEEPLGELIADDVNEVVSDASATETDFSLSPSQSEQNIEEDGQNSLDDQSPLTELQPLPLPPPLPVEARISESLGEEESSDLVTEQQSQNPNAAEPGPRARKRRRRKRFFTEINANPAFSRNRRTSVGKEVDSEALIAMSVGFPVYSLTEEEIEANVVSIIGGKDQANYIVVRNHIIALWRSNVSNWLTRDHALESIRAEHKTLVDTAYNFLLEHGYINFGLAPVIKEAKLRSFDGVEPPNVVVVGAGLAGLVAARQLLSMGFRVLVLEGRDRPGGRVKTRKMKGGDGVEAMADVGGSVLTGINGNPLGVLARQLGLPLHKVRDICPLYLPNGELADASVDSKIEASFNKLLDRVCKLRQSMIEENKSVDVPLGEALETFRLVYGVAEDQQERMLLDWHLANLEYANATLLGNLSMAYWDQDDPYEMGGDHCFIPGGNEIFVHALAENLPIFYGSTVESIRYGSNGVLVYTGNKEFHCDMALCTVPLGVLKKGSIEFYPELPHKKKEAIQRLGFGLLNKVAMLFPCNFWGEEIDTFGRLTEDPSTRGEFFLFYSYSSVSGGPLLVALVAGDAAERFETLSPTDSVKRVLQILRGIYHPKGIVVPDPVQALCSRWGQDKFSYGSYSYVAVGSSGDDYDILAESVGDGRVFFAGEATNRQYPATMHGAFLSGMREAANILRVARRRASSSALNPNQICIDKEEEVDEEEDRCLDQLFETPDLTFGNFSVLFTPNSDEPESMSLLRVRIQMEKPESGLWLYGLVTRKQAIELGEMDGDELRNEYLREKLGLVPVERKSLSQEGESMISSLKAARLNRQIFD.

Basic and acidic residues predominate over residues 1-18 (MSTETKETRPETKPEDLG). The interval 1 to 131 (MSTETKETRP…PGPRARKRRR (131 aa)) is disordered. Acidic residues predominate over residues 26-40 (PGEEPLGELIADDVN). Composition is skewed to polar residues over residues 46 to 62 (ASAT…QSEQ) and 107 to 118 (DLVTEQQSQNPN). Positions 154–255 (GKEVDSEALI…FGLAPVIKEA (102 aa)) constitute an SWIRM domain. FAD contacts are provided by E295, R297, and R303. The short motif at 516-523 (LKKGSIEF) is the Nuclear localization signal element. An FAD-binding site is contributed by E679.

The protein belongs to the flavin monoamine oxidase family. In terms of assembly, interacts with CZS. Interacts with OTU6/OTLD1. FAD serves as cofactor. In terms of tissue distribution, expressed in the shoot and root apical regions of young seedlings. Expressed in cotyledons and inflorescences.

It is found in the nucleus. The protein resides in the cytoplasm. Its function is as follows. Probable histone demethylase that reduces the levels of histone H3 'Lys-4' methylation in chromatin of the floral repressor FLOWERING LOCUS C (FLC) and the sporophytically silenced floral repressor FWA. Seems to act in partial redundancy with FLOWERING LOCUS D (FLD) to repress FLC expression. Required for cytosine methylation of FWA. Controls primary seed dormancy by regulating DOG1 and abscisic acid signaling-related genes. In association with OTU6/OTLD1, involved in transcriptional gene repression via histone deubiquitination and demethylation. The protein is Lysine-specific histone demethylase 1 homolog 1 of Arabidopsis thaliana (Mouse-ear cress).